The following is a 392-amino-acid chain: Succinate--CoA ligase [ADP-forming] subunit beta (392 aa).

An ATP-grasp domain is found at 9–236; the sequence is KELFAAHGVP…PSAADPLEAK (228 aa). ATP is bound by residues K45, 52 to 54, V94, and E99; that span reads GRG. Positions 191 and 205 each coordinate Mg(2+). Substrate-binding positions include N256 and 318-320; that span reads GIT.

This sequence belongs to the succinate/malate CoA ligase beta subunit family. In terms of assembly, heterotetramer of two alpha and two beta subunits. Mg(2+) serves as cofactor.

It catalyses the reaction succinate + ATP + CoA = succinyl-CoA + ADP + phosphate. It carries out the reaction GTP + succinate + CoA = succinyl-CoA + GDP + phosphate. Its pathway is carbohydrate metabolism; tricarboxylic acid cycle; succinate from succinyl-CoA (ligase route): step 1/1. Succinyl-CoA synthetase functions in the citric acid cycle (TCA), coupling the hydrolysis of succinyl-CoA to the synthesis of either ATP or GTP and thus represents the only step of substrate-level phosphorylation in the TCA. The beta subunit provides nucleotide specificity of the enzyme and binds the substrate succinate, while the binding sites for coenzyme A and phosphate are found in the alpha subunit. This Acidothermus cellulolyticus (strain ATCC 43068 / DSM 8971 / 11B) protein is Succinate--CoA ligase [ADP-forming] subunit beta.